The following is an 88-amino-acid chain: Class I hydrophobin F (88 aa).

Residues 1–21 (MLSRLFTVPAILLATLGSAAT) form the signal peptide. Cystine bridges form between Cys-30/Cys-67, Cys-34/Cys-58, Cys-35/Cys-51, and Cys-68/Cys-84.

The protein belongs to the fungal hydrophobin family.

The protein resides in the secreted. Its subcellular location is the cell wall. It localises to the vacuole. The protein localises to the cytoplasmic vesicle. Functionally, aerial growth, conidiation, and dispersal of filamentous fungi in the environment rely upon a capability of their secreting small amphipathic proteins called hydrophobins (HPBs) with low sequence identity. Class I can self-assemble into an outermost layer of rodlet bundles on aerial cell surfaces, conferring cellular hydrophobicity that supports fungal growth, development and dispersal; whereas Class II form highly ordered films at water-air interfaces through intermolecular interactions but contribute nothing to the rodlet structure. Hyd1F contributes to certain cell wall-related features, such as hydrophobicity but is not involved in cell wall-related events during fungal proliferation in host hemocoel. Does not contribute to conidial hydrophobicity. The sequence is that of Class I hydrophobin F from Beauveria bassiana (strain ARSEF 2860) (White muscardine disease fungus).